The chain runs to 148 residues: Protein PLANT CADMIUM RESISTANCE 9 (148 aa).

Residues 59–78 (LAGLMVVAMSSIGCGWYYAS) form a helical membrane-spanning segment.

It belongs to the cornifelin family.

Its subcellular location is the membrane. Functionally, may be involved in cadmium resistance. In Arabidopsis thaliana (Mouse-ear cress), this protein is Protein PLANT CADMIUM RESISTANCE 9 (PCR9).